We begin with the raw amino-acid sequence, 308 residues long: Phosphoribosylaminoimidazole-succinocarboxamide synthase (308 aa).

This sequence belongs to the SAICAR synthetase family.

The enzyme catalyses 5-amino-1-(5-phospho-D-ribosyl)imidazole-4-carboxylate + L-aspartate + ATP = (2S)-2-[5-amino-1-(5-phospho-beta-D-ribosyl)imidazole-4-carboxamido]succinate + ADP + phosphate + 2 H(+). It participates in purine metabolism; IMP biosynthesis via de novo pathway; 5-amino-1-(5-phospho-D-ribosyl)imidazole-4-carboxamide from 5-amino-1-(5-phospho-D-ribosyl)imidazole-4-carboxylate: step 1/2. This Xanthomonas euvesicatoria pv. vesicatoria (strain 85-10) (Xanthomonas campestris pv. vesicatoria) protein is Phosphoribosylaminoimidazole-succinocarboxamide synthase.